The primary structure comprises 223 residues: uncharacterized protein (223 aa).

The span at 1 to 11 shows a compositional bias: basic residues; sequence MLWVQRKRRRK. Residues 1 to 37 form a disordered region; it reads MLWVQRKRRRKETSECPSDKDKSPESHKAKNESWIKS. A compositionally biased stretch (basic and acidic residues) spans 12–37; it reads ETSECPSDKDKSPESHKAKNESWIKS. Serine 43 is modified (phosphoserine). 2 disordered regions span residues 49–73 and 196–223; these read LDNN…SSTV and THTF…NRRH. Residues 51–61 are compositionally biased toward polar residues; the sequence is NNASASGNATQ. Positions 62 to 73 are enriched in low complexity; the sequence is TESGSEEVSSTV. Positions 202-223 are enriched in basic residues; sequence HSHHSHHGHPSHQSHSLPNRRH.

This is an uncharacterized protein from Homo sapiens (Human).